We begin with the raw amino-acid sequence, 475 residues long: Exodeoxyribonuclease 7 large subunit (475 aa).

Positions 452 to 475 (DHGLNRSSKSKRIKSKQDDQGTLF) are disordered. Residues 466-475 (SKQDDQGTLF) are compositionally biased toward basic and acidic residues.

Belongs to the XseA family. In terms of assembly, heterooligomer composed of large and small subunits.

The protein localises to the cytoplasm. It carries out the reaction Exonucleolytic cleavage in either 5'- to 3'- or 3'- to 5'-direction to yield nucleoside 5'-phosphates.. Bidirectionally degrades single-stranded DNA into large acid-insoluble oligonucleotides, which are then degraded further into small acid-soluble oligonucleotides. The sequence is that of Exodeoxyribonuclease 7 large subunit from Bartonella quintana (strain Toulouse) (Rochalimaea quintana).